Reading from the N-terminus, the 206-residue chain is MKAKREALLSLFQAIKENKVDEDIVELLLLINSIKGVYTTSSCSGRIGIIEEPSLGAKPLSRWLIKVHRPIKFEEAKKALKNAQKGLIFLKSQPPIFHVVTESLELARKIHEIGLSSGFKYTTYKVISRRYLVEINGTEYLTVPLGKDGKVFVTDEYLEFVIEIGNQMLMRGKSRLPRLREKFEELKEEVGEDPLFTTLSTEKLSL.

Belongs to the TYW3 family.

It carries out the reaction 4-demethyl-7-[(3S)-3-amino-3-carboxypropyl]wyosine(37) in tRNA(Phe) + S-adenosyl-L-methionine = 7-[(3S)-3-amino-3-carboxypropyl]wyosine(37) in tRNA(Phe) + S-adenosyl-L-homocysteine + H(+). Its function is as follows. S-adenosyl-L-methionine-dependent methyltransferase that acts as a component of the wyosine derivatives biosynthesis pathway. Probably methylates N-4 position of wybutosine-86 to produce wybutosine-72. The chain is tRNA(Phe) 7-((3-amino-3-carboxypropyl)-4-demethylwyosine(37)-N(4))-methyltransferase 2 from Pyrococcus furiosus (strain ATCC 43587 / DSM 3638 / JCM 8422 / Vc1).